Reading from the N-terminus, the 302-residue chain is Dioxygenase olcK (302 aa).

The Fe cation site is built by His136, Asp138, and His213.

Belongs to the PhyH family. As to quaternary structure, homodimer. It depends on Fe cation as a cofactor.

The protein localises to the peroxisome matrix. The protein operates within secondary metabolite biosynthesis; terpenoid biosynthesis. Its function is as follows. Dioxygenase; part of the gene cluster that mediates the biosynthesis of 15-deoxyoxalicine B. The first step of the pathway is the synthesis of nicotinyl-CoA from nicotinic acid by the nicotinic acid-CoA ligase olcI. Nicotinyl-CoA is then a substrate of polyketide synthase olcA to produce 4-hydroxy-6-(3-pyridinyl)-2H-pyran-2-one (HPPO) which is further prenylated by the polyprenyl transferase olcH to yield geranylgeranyl-HPPO. Geranylgeranyl pyrophosphate is provided by the cluster-specific geranylgeranyl pyrophosphate synthase olcC. The FAD-dependent monooxygenase olcE catalyzes the epoxidation of geranylgeranyl-HPPO and the terpene cyclase olcD catalyzes the cyclization of the terpenoid component, resulting in the formation of the tricyclic terpene moiety seen in predecaturin E. The cytochrome P450 monooxygenase then catalyzes the allylic oxidation of predecaturin E, which is followed by spirocylization with concomitant loss of one molecule of water to form decaturin E. Decaturin E is the substrate of the cytochrome P450 monooxygenase olcJ which hydroxylates it at the C-29 position to form decaturin F. The short-chain dehydrogenase/reductase olcF may catalyze the oxidation of decaturin F to generate the 29-hydroxyl-27-one intermediate, and subsequent hemiacetal formation probably leads to the formation of decaturin C. The dioxygenase olcK may be a peroxisomal enzyme that catalyzes the hydroxylation of decaturin C into decaturin A once decaturin C is shuttled into the peroxisome by the MFS transporter olcL. Finally the cytochrome P450 monooxygenase olcB catalyzes the oxidative rearrangement to yield 15-deoxyoxalicine B. In the absence of olcJ, decaturin E may be shunted to a pathway in which it is oxidized to a ketone, possibly by olcF, to form decaturin D, which undergoes further allylic oxidation to yield decaturin G. Moreover, in the absence of oclK or oclL, oclB can convert decaturin C into 15-deoxyoxalicine A. In Penicillium canescens, this protein is Dioxygenase olcK.